The primary structure comprises 257 residues: Phycoerythrobilin:ferredoxin oxidoreductase (257 aa).

Belongs to the HY2 family.

It carries out the reaction (3Z)-phycoerythrobilin + oxidized 2[4Fe-4S]-[ferredoxin] = 15,16-dihydrobiliverdin + reduced 2[4Fe-4S]-[ferredoxin] + 2 H(+). Functionally, catalyzes the two-electron reduction of the C2 and C3(1) diene system of 15,16-dihydrobiliverdin. The polypeptide is Phycoerythrobilin:ferredoxin oxidoreductase (pebB) (Prochlorococcus marinus (strain SARG / CCMP1375 / SS120)).